An 82-amino-acid chain; its full sequence is Acyl carrier protein (82 aa).

One can recognise a Carrier domain in the interval 2–77 (DNVADRVKKV…QAIDYVSAHI (76 aa)). S37 is subject to O-(pantetheine 4'-phosphoryl)serine.

This sequence belongs to the acyl carrier protein (ACP) family. In terms of processing, 4'-phosphopantetheine is transferred from CoA to a specific serine of apo-ACP by AcpS. This modification is essential for activity because fatty acids are bound in thioester linkage to the sulfhydryl of the prosthetic group.

It is found in the cytoplasm. The protein operates within lipid metabolism; fatty acid biosynthesis. Its function is as follows. Carrier of the growing fatty acid chain in fatty acid biosynthesis. In Acidithiobacillus ferrooxidans (strain ATCC 23270 / DSM 14882 / CIP 104768 / NCIMB 8455) (Ferrobacillus ferrooxidans (strain ATCC 23270)), this protein is Acyl carrier protein.